The sequence spans 177 residues: uncharacterized protein (177 aa).

This sequence belongs to the flavoredoxin family. FMN is required as a cofactor.

This is an uncharacterized protein from Archaeoglobus fulgidus (strain ATCC 49558 / DSM 4304 / JCM 9628 / NBRC 100126 / VC-16).